Here is a 459-residue protein sequence, read N- to C-terminus: Protein phosphatase 1M (459 aa).

The span at 1–10 (MSAGWFRRRF) shows a compositional bias: basic residues. The tract at residues 1–64 (MSAGWFRRRF…SRPVRSPARG (64 aa)) is disordered. Over residues 14–27 (EPLPAPRPPGPHAS) the composition is skewed to pro residues. Residues 38 to 48 (RGSSSSPGAAD) are compositionally biased toward low complexity. Positions 125 and 126 each coordinate Mn(2+). The region spanning 162 to 459 (MHLNGRCICP…HSQGQESSDH (298 aa)) is the PPM-type phosphatase domain.

The protein belongs to the PP2C family. Requires Mg(2+) as cofactor. Mn(2+) serves as cofactor.

The protein resides in the nucleus. The catalysed reaction is O-phospho-L-seryl-[protein] + H2O = L-seryl-[protein] + phosphate. The enzyme catalyses O-phospho-L-threonyl-[protein] + H2O = L-threonyl-[protein] + phosphate. In Homo sapiens (Human), this protein is Protein phosphatase 1M (PPM1M).